The sequence spans 130 residues: Small ribosomal subunit protein uS9 (130 aa).

Positions 107–130 are disordered; the sequence is DSRKVERKKPGLKKARKASQFSKR. Residues 111–130 show a composition bias toward basic residues; sequence VERKKPGLKKARKASQFSKR.

This sequence belongs to the universal ribosomal protein uS9 family.

In Streptococcus sanguinis (strain SK36), this protein is Small ribosomal subunit protein uS9.